The chain runs to 383 residues: 3-ketosteroid-9-alpha-monooxygenase, oxygenase component (383 aa).

The Rieske domain occupies Trp-24–Val-126. Cys-65, His-67, Cys-84, and His-87 together coordinate [2Fe-2S] cluster. Fe cation contacts are provided by Asn-173, His-179, His-184, and Asp-302.

In terms of assembly, homotrimer. The two-component system 3-ketosteroid-9-alpha-monooxygenase is composed of an oxygenase component KshA and a reductase component KshB. [2Fe-2S] cluster is required as a cofactor. The cofactor is Fe cation.

The enzyme catalyses androsta-1,4-diene-3,17-dione + 2 reduced [2Fe-2S]-[ferredoxin] + O2 + 2 H(+) = 9alpha-hydroxyandrosta-1,4-diene-3,17-dione + 2 oxidized [2Fe-2S]-[ferredoxin] + H2O. It functions in the pathway lipid metabolism; steroid biosynthesis. Its function is as follows. Involved in the degradation of cholesterol. Catalyzes the introduction of a 9a-hydroxyl moiety into 1,4-androstadiene-3,17-dione (ADD) to yield the 9alpha-hydroxy-1,4-androstadiene-3,17-dione (9OHADD) intermediate which spontaneously form 3-hydroxy-9,10-seconandrost-1,3,5(10)-triene-9,17-dione (HSA) via the meta-cleavage of ring B with concomitant aromatization of ring A. The polypeptide is 3-ketosteroid-9-alpha-monooxygenase, oxygenase component (kshA) (Mycolicibacterium smegmatis (strain ATCC 700084 / mc(2)155) (Mycobacterium smegmatis)).